The chain runs to 434 residues: Beta-enolase (434 aa).

Alanine 2 bears the N-acetylalanine mark. At threonine 72 the chain carries Phosphothreonine. Phosphoserine is present on residues serine 83 and serine 157. Histidine 158 and glutamate 167 together coordinate substrate. Serine 176 carries the phosphoserine modification. Position 205 is a phosphothreonine (threonine 205). Glutamate 210 serves as the catalytic Proton donor. Threonine 229 is subject to Phosphothreonine. A Phosphotyrosine modification is found at tyrosine 236. Aspartate 245 serves as a coordination point for Mg(2+). Phosphoserine is present on serine 263. 2 residues coordinate substrate: glutamate 293 and aspartate 318. Mg(2+) is bound by residues glutamate 293 and aspartate 318. Lysine 343 functions as the Proton acceptor in the catalytic mechanism. Substrate-binding positions include 370 to 373 and lysine 394; that span reads SHRS.

This sequence belongs to the enolase family. In terms of assembly, mammalian enolase is composed of 3 isozyme subunits, alpha, beta and gamma, which can form homodimers or heterodimers which are cell-type and development-specific. Interacts with PNKD. Mg(2+) is required as a cofactor. As to expression, the alpha/alpha homodimer is expressed in embryo and in most adult tissues. The alpha/beta heterodimer and the beta/beta homodimer are found in striated muscle, and the alpha/gamma heterodimer and the gamma/gamma homodimer in neurons.

The protein localises to the cytoplasm. It catalyses the reaction (2R)-2-phosphoglycerate = phosphoenolpyruvate + H2O. The protein operates within carbohydrate degradation; glycolysis; pyruvate from D-glyceraldehyde 3-phosphate: step 4/5. Glycolytic enzyme that catalyzes the conversion of 2-phosphoglycerate to phosphoenolpyruvate. Appears to have a function in striated muscle development and regeneration. The protein is Beta-enolase (Eno3) of Rattus norvegicus (Rat).